Here is an 87-residue protein sequence, read N- to C-terminus: U3-theraphotoxin-Hhn1o (87 aa).

A signal peptide spans 1-24; it reads MVNMKASMFLTFAGLVLLFVVCYA. Residues 25-52 constitute a propeptide that is removed on maturation; it reads SESEEKEFPKEMLSSIFAVDNDFKQEER. 2 disulfide bridges follow: C54-C67 and C61-C72.

It belongs to the neurotoxin 10 (Hwtx-1) family. 51 (Hntx-8) subfamily. Hntx-8 sub-subfamily. Expressed by the venom gland.

It is found in the secreted. In terms of biological role, ion channel inhibitor. This chain is U3-theraphotoxin-Hhn1o, found in Cyriopagopus hainanus (Chinese bird spider).